The primary structure comprises 98 residues: NADH-ubiquinone oxidoreductase chain 4L (98 aa).

The next 3 helical transmembrane spans lie at 1 to 21 (MTAIYLNLTMAFSLALMGVLV), 29 to 49 (TLLCLEGMMLSLFILMTLLIT), and 59 to 79 (LPLTLLVFSACEAAIGLALLV).

It belongs to the complex I subunit 4L family. In terms of assembly, core subunit of respiratory chain NADH dehydrogenase (Complex I) which is composed of 45 different subunits.

Its subcellular location is the mitochondrion inner membrane. The enzyme catalyses a ubiquinone + NADH + 5 H(+)(in) = a ubiquinol + NAD(+) + 4 H(+)(out). Core subunit of the mitochondrial membrane respiratory chain NADH dehydrogenase (Complex I) which catalyzes electron transfer from NADH through the respiratory chain, using ubiquinone as an electron acceptor. Part of the enzyme membrane arm which is embedded in the lipid bilayer and involved in proton translocation. The polypeptide is NADH-ubiquinone oxidoreductase chain 4L (MT-ND4L) (Notoryctes typhlops (Southern marsupial mole)).